Here is a 485-residue protein sequence, read N- to C-terminus: Predicted GPI-anchored protein 27 (485 aa).

The N-terminal stretch at 1 to 20 (MHFTSSLLATLIWFTLPVQS) is a signal peptide. Residues N30, N86, N96, and N444 are each glycosylated (N-linked (GlcNAc...) asparagine). G467 carries the GPI-anchor amidated glycine lipid modification. Residues 468–485 (LVLVSSGVLLGTCLLFIL) constitute a propeptide, removed in mature form.

It localises to the cell membrane. The sequence is that of Predicted GPI-anchored protein 27 (PGA27) from Candida albicans (strain SC5314 / ATCC MYA-2876) (Yeast).